The following is a 444-amino-acid chain: Na(+)/H(+) antiporter NhaA 2 (444 aa).

A run of 11 helical transmembrane segments spans residues 21–41 (FSGIFLFFCAVSAMIVANSPF), 64–84 (FSIHDWINDVLMSIFFLMVGL), 102–122 (AFPVIGAVGGMIVPGVIYYVL), 131–151 (GFGIPMATDIAFALGVILLLG), 160–180 (VFLVTLAVADDLGAIVVIAVF), 185–205 (EGLHFIYLGVAAGLLILLTGI), 212–232 (HLGVYIGIGILLWFCVHHSGI), 307–327 (ALQPLCAFIIMPLFAFANAGV), 342–362 (LGVILGLVVGKPLGILSLTFL), 377–397 (WSHIFGAGMLAGIGFTMSMFV), and 413–433 (IAILLASSIAGIVGSLYLIIN).

The protein belongs to the NhaA Na(+)/H(+) (TC 2.A.33) antiporter family.

Its subcellular location is the cell inner membrane. The catalysed reaction is Na(+)(in) + 2 H(+)(out) = Na(+)(out) + 2 H(+)(in). Its function is as follows. Na(+)/H(+) antiporter that extrudes sodium in exchange for external protons. The chain is Na(+)/H(+) antiporter NhaA 2 from Helicobacter hepaticus (strain ATCC 51449 / 3B1).